Consider the following 306-residue polypeptide: UDP-3-O-acyl-N-acetylglucosamine deacetylase (306 aa).

The Zn(2+) site is built by His78, His237, and Asp241. The Proton donor role is filled by His264.

It belongs to the LpxC family. The cofactor is Zn(2+).

The enzyme catalyses a UDP-3-O-[(3R)-3-hydroxyacyl]-N-acetyl-alpha-D-glucosamine + H2O = a UDP-3-O-[(3R)-3-hydroxyacyl]-alpha-D-glucosamine + acetate. It functions in the pathway glycolipid biosynthesis; lipid IV(A) biosynthesis; lipid IV(A) from (3R)-3-hydroxytetradecanoyl-[acyl-carrier-protein] and UDP-N-acetyl-alpha-D-glucosamine: step 2/6. Its function is as follows. Catalyzes the hydrolysis of UDP-3-O-myristoyl-N-acetylglucosamine to form UDP-3-O-myristoylglucosamine and acetate, the committed step in lipid A biosynthesis. In Aromatoleum aromaticum (strain DSM 19018 / LMG 30748 / EbN1) (Azoarcus sp. (strain EbN1)), this protein is UDP-3-O-acyl-N-acetylglucosamine deacetylase.